A 775-amino-acid chain; its full sequence is DNA polymerase (775 aa).

Belongs to the DNA polymerase type-B family.

The catalysed reaction is DNA(n) + a 2'-deoxyribonucleoside 5'-triphosphate = DNA(n+1) + diphosphate. The sequence is that of DNA polymerase (pol) from Thermococcus sp. (strain 9oN-7).